Consider the following 327-residue polypeptide: tRNA dimethylallyltransferase (327 aa).

Residue 14–21 (GPTASGKT) participates in ATP binding. 16 to 21 (TASGKT) is a binding site for substrate. Interaction with substrate tRNA stretches follow at residues 39 to 42 (DSAL) and 163 to 167 (QRIQR).

Belongs to the IPP transferase family. As to quaternary structure, monomer. Mg(2+) is required as a cofactor.

It catalyses the reaction adenosine(37) in tRNA + dimethylallyl diphosphate = N(6)-dimethylallyladenosine(37) in tRNA + diphosphate. Functionally, catalyzes the transfer of a dimethylallyl group onto the adenine at position 37 in tRNAs that read codons beginning with uridine, leading to the formation of N6-(dimethylallyl)adenosine (i(6)A). This Xanthomonas campestris pv. campestris (strain 8004) protein is tRNA dimethylallyltransferase.